Reading from the N-terminus, the 365-residue chain is IgG receptor FcRn large subunit p51 (365 aa).

Positions 1 to 21 (MGMPLPWALSLLLVLLPQTWG) are cleaved as a signal peptide. Residues 22–110 (SETRPPLMYH…KTLEKILNGT (89 aa)) form an alpha-1 region. The Extracellular segment spans residues 22 to 297 (SETRPPLMYH…VDLDSSARSS (276 aa)). Residues Asn108, Asn125, Asn149, and Asn246 are each glycosylated (N-linked (GlcNAc...) asparagine). An alpha-2 region spans residues 111–200 (YTLQGLLGCE…ERGRRNLEWK (90 aa)). 2 disulfide bridges follow: Cys119–Cys182 and Cys221–Cys275. The interval 201-290 (EPPSMRLKAR…GLAQPLTVDL (90 aa)) is alpha-3. Residues 202 to 289 (PPSMRLKARP…EGLAQPLTVD (88 aa)) form the Ig-like C1-type domain. Residues 291-297 (DSSARSS) form a connecting peptide region. The chain crosses the membrane as a helical span at residues 298-321 (VPVVGIVLGLLLVVVAIAGGVLLW). At 322–365 (GRMRSGLPAPWLSLSGDDSGDLLPGGNLPPEAEPQGANAFPATS) the chain is on the cytoplasmic side. Residue Ser334 is modified to Phosphoserine. The interval 343–365 (LLPGGNLPPEAEPQGANAFPATS) is disordered.

This sequence belongs to the immunoglobulin superfamily. As to quaternary structure, fcRn complex consists of two subunits: p51, and p14 which is equivalent to beta-2-microglobulin. It forms an MHC class I-like heterodimer. Interacts with albumin/ALB; this interaction regulates ALB homeostasis. Intestinal epithelium of suckling rodents. Expressed in neonatal intestine and fetal yolk sac.

The protein localises to the cell membrane. It is found in the endosome membrane. Cell surface receptor that transfers passive humoral immunity from the mother to the newborn. Binds to the Fc region of monomeric immunoglobulin gamma and mediates its selective uptake from milk. IgG in the milk is bound at the apical surface of the intestinal epithelium. The resultant FcRn-IgG complexes are transcytosed across the intestinal epithelium and IgG is released from FcRn into blood or tissue fluids. Throughout life, contributes to effective humoral immunity by recycling IgG and extending its half-life in the circulation. Mechanistically, monomeric IgG binding to FcRn in acidic endosomes of endothelial and hematopoietic cells recycles IgG to the cell surface where it is released into the circulation. In addition of IgG, regulates homeostasis of the other most abundant circulating protein albumin/ALB. This Mus musculus (Mouse) protein is IgG receptor FcRn large subunit p51 (Fcgrt).